A 288-amino-acid chain; its full sequence is Probable pectinesterase 56 (288 aa).

Positions 1-27 (MAMTSTMQLLVLSFLVIASLFLGATVA) are cleaved as a signal peptide. Residues asparagine 55 and asparagine 95 are each glycosylated (N-linked (GlcNAc...) asparagine). Substrate is bound by residues threonine 120 and glutamine 150. Aspartate 173 (proton donor) is an active-site residue. The Nucleophile role is filled by aspartate 194. N-linked (GlcNAc...) asparagine glycosylation occurs at asparagine 242. The substrate site is built by arginine 262 and tryptophan 264.

Belongs to the pectinesterase family.

The protein resides in the secreted. It localises to the cell wall. It carries out the reaction [(1-&gt;4)-alpha-D-galacturonosyl methyl ester](n) + n H2O = [(1-&gt;4)-alpha-D-galacturonosyl](n) + n methanol + n H(+). The protein operates within glycan metabolism; pectin degradation; 2-dehydro-3-deoxy-D-gluconate from pectin: step 1/5. In terms of biological role, acts in the modification of cell walls via demethylesterification of cell wall pectin. The chain is Probable pectinesterase 56 (PME56) from Arabidopsis thaliana (Mouse-ear cress).